We begin with the raw amino-acid sequence, 143 residues long: S-protein homolog 11 (143 aa).

The N-terminal stretch at 1-20 (MNCFSFSFIIIVLCAGSSNA) is a signal peptide.

It belongs to the plant self-incompatibility (S1) protein family.

Its subcellular location is the secreted. This is S-protein homolog 11 from Arabidopsis thaliana (Mouse-ear cress).